The primary structure comprises 254 residues: L-rhamnose 1-dehydrogenase (NAD(P)(+)) (254 aa).

Positions 13, 15, 18, 64, 65, and 91 each coordinate NADP(+). Residue Ser144 is the Proton donor of the active site. Positions 144, 146, 154, and 157 each coordinate beta-L-rhamnose. Residues Tyr157 and Lys161 each contribute to the NADP(+) site. The Proton acceptor role is filled by Tyr157. Residue Lys161 is the Lowers pKa of active site Tyr of the active site. Position 189 (Thr189) interacts with beta-L-rhamnose. Ile190 is an NADP(+) binding site. Residue Asn195 coordinates beta-L-rhamnose.

It belongs to the short-chain dehydrogenases/reductases (SDR) family.

The catalysed reaction is L-rhamnofuranose + NAD(+) = L-rhamnono-1,4-lactone + NADH + H(+). It catalyses the reaction L-rhamnofuranose + NADP(+) = L-rhamnono-1,4-lactone + NADPH + H(+). The protein operates within carbohydrate degradation; L-rhamnose degradation. Its function is as follows. NAD(P)-dependent dehydrogenase that catalyzes the oxidation of L-rhamnose to L-rhamnono-1,4-lactone. Also shows high activity with L-lyxose and low activity with L-mannose. Can utilize either NAD(+) or NADP(+), with a slight preference for NADP(+). Catalyzes the first step in an alternative pathway for rhamnose utilization that does not involve phosphorylated intermediates. This chain is L-rhamnose 1-dehydrogenase (NAD(P)(+)), found in Sphingomonas sp. (strain SKA58).